We begin with the raw amino-acid sequence, 197 residues long: Probable GTP-binding protein EngB (197 aa).

Residues 22–195 (ALPELALVGR…WQWIEERTGV (174 aa)) form the EngB-type G domain. GTP-binding positions include 30-37 (GRSNVGKS), 57-61 (GKTQT), 75-78 (DVPG), 142-145 (TKVD), and 174-176 (FSA). Mg(2+) is bound by residues Ser37 and Thr59.

The protein belongs to the TRAFAC class TrmE-Era-EngA-EngB-Septin-like GTPase superfamily. EngB GTPase family. It depends on Mg(2+) as a cofactor.

Necessary for normal cell division and for the maintenance of normal septation. This chain is Probable GTP-binding protein EngB, found in Limosilactobacillus fermentum (strain NBRC 3956 / LMG 18251) (Lactobacillus fermentum).